The primary structure comprises 780 residues: Nuclear cap-binding protein subunit 1 (780 aa).

Positions 1-25 (MSSYRGSTRPRKRTREGENYGFRPH) are disordered. Ser29 is subject to Phosphoserine. The region spanning 34–249 (AARIKKDITF…KQLILSREND (216 aa)) is the MIF4G domain. Residues 738–780 (ANEPVQENTSEEQEDTKMQPVDAVDEQPSENNQTAADATNEEK) form a disordered region.

Belongs to the NCBP1 family. As to quaternary structure, component of the nuclear cap-binding complex (CBC), a heterodimer composed of cbc1 and cbc2 that interacts with capped RNAs.

Its subcellular location is the cytoplasm. It localises to the perinuclear region. The protein localises to the nucleus. Component of the CBC complex, which binds cotranscriptionally to the 5'-cap of pre-mRNAs and is involved in maturation, export and degradation of nuclear mRNAs. The polypeptide is Nuclear cap-binding protein subunit 1 (cbc1) (Schizosaccharomyces pombe (strain 972 / ATCC 24843) (Fission yeast)).